The following is a 572-amino-acid chain: DBH-like monooxygenase protein 2 homolog (572 aa).

The first 26 residues, 1–26, serve as a signal peptide directing secretion; sequence MGTCLKGNMSVLSLVLFLLSVQQFWA. N-linked (GlcNAc...) asparagine glycosylation is found at N8, N64, N187, and N203. Residues 27–552 are Extracellular-facing; the sequence is QEDPLLPFSE…SPPEPCVRAC (526 aa). The DOMON domain occupies 42-157; it reads HNVQLKWGFD…LPMKLIYAYG (116 aa). Residue Y207 is part of the active site. Disulfide bonds link C209–C256 and C244–C263. H237 and H238 together coordinate Cu cation. Position 301 (H301) interacts with Cu cation. A glycan (N-linked (GlcNAc...) asparagine) is linked at N306. Cystine bridges form between C358-C472 and C435-C457. Residue H381 is part of the active site. Positions 381, 383, and 456 each coordinate Cu cation. N-linked (GlcNAc...) asparagine glycosylation is found at N468, N503, N518, and N534. A helical transmembrane segment spans residues 553 to 571; the sequence is ATKNLAFMSLFLCLAGMWA. A topological domain (cytoplasmic) is located at residue S572.

This sequence belongs to the copper type II ascorbate-dependent monooxygenase family. Cu(2+) serves as cofactor.

The protein resides in the membrane. The protein is DBH-like monooxygenase protein 2 homolog (moxd2) of Danio rerio (Zebrafish).